We begin with the raw amino-acid sequence, 136 residues long: uncharacterized protein (136 aa).

A helical transmembrane segment spans residues 19-39 (LGFPLGTALLLIIIFSLSGIF). Disordered stretches follow at residues 54 to 87 (SLAN…LSVP) and 112 to 136 (KLTV…VPLY).

It is found in the membrane. This is an uncharacterized protein from Arabidopsis thaliana (Mouse-ear cress).